We begin with the raw amino-acid sequence, 146 residues long: DNA-directed RNA polymerases II, IV and V subunit 8B (146 aa).

Belongs to the eukaryotic RPB8 RNA polymerase subunit family. In terms of assembly, component of the RNA polymerase II, IV and V complexes. Associates with the mediator complex.

It localises to the nucleus. In terms of biological role, DNA-dependent RNA polymerase catalyzes the transcription of DNA into RNA using the four ribonucleoside triphosphates as substrates. Component of RNA polymerase II which synthesizes mRNA precursors and many functional non-coding RNAs. Pol II is the central component of the basal RNA polymerase II transcription machinery. It is composed of mobile elements that move relative to each other. Component of RNA polymerases IV and V which mediate short-interfering RNAs (siRNA) accumulation and subsequent RNA-directed DNA methylation-dependent (RdDM) transcriptional gene silencing (TGS) of endogenous repeated sequences, including transposable elements. This Arabidopsis thaliana (Mouse-ear cress) protein is DNA-directed RNA polymerases II, IV and V subunit 8B (NRPB8B).